The following is a 38-amino-acid chain: FDGRNAAANDKASDLVALTVRGCCSHPACSVNHPELCG.

The propeptide occupies 1–21 (FDGRNAAANDKASDLVALTVR). 2 disulfide bridges follow: C23–C29 and C24–C37. The tract at residues 25–27 (SHP) is ser-Xaa-Pro motif, crucial for potent interaction with nAChR. At C37 the chain carries Cysteine amide.

It belongs to the conotoxin A superfamily. In terms of processing, the hydroxylation at position Pro-27 is critical, since an hydroxylation at this position decreases potency of the toxin to inhibit both alpha-3-beta-2 (1300-fold) and alpha-6/alpha-3-beta-2-beta-3 (130-fold) nAChRs. Post-translationally, a non-modified residue at position Pro-34 is critical, since a hydroxylation at this position decreases potency of the toxin to inhibit alpha-3-beta-2 (1-45-fold) and increases potency to inhibit alpha-6/alpha-3-beta-2-beta-3 (1.77-fold) nAChRs. As to expression, expressed by the venom duct.

It localises to the secreted. Alpha-conotoxins act on postsynaptic membranes, they bind to the nicotinic acetylcholine receptors (nAChR) and thus inhibit them. This synthetic peptide potently and reversibly blocks alpha-9-alpha-10/CHRNA9-CHRNA10 nAChR (IC(50)=6.9-54.9 nM), alpha-3-beta-2/CHRNA3-CHRNB2 (IC(50)=9.7-97.5 nM) and alpha-6/alpha-3-beta-2-beta-3 (CHRNA6/CHRNA3-CHRNB2-CHRNB3) (IC(50)=11.1-17.2 nM). It also inhibits alpha-6/alpha-3-beta-4 (CHRNA6/CHRNA3-CHRNB4) nAChR with a higher potency on human (IC(50)=6.75 nM) than on rat receptors (IC(50)=130-147 nM). Also shows a weak ability to inhibit alpha-3-beta-4/CHRNA3-CHRNB4 (IC(50)=480-1500 nM). This synthetic toxin also inhibits N-type calcium channels (Ca2.2/CACNA1B) (IC(50)=1.1 nM) via the activation of the G protein-coupled GABA(B) receptor in DRG neurons. Also exhibits inhibition of D.melanogaster alpha-7/CHRNA7 nAChRs. The protein is Alpha-conotoxin PeIA of Conus pergrandis (Grand cone).